A 129-amino-acid polypeptide reads, in one-letter code: Glycine cleavage system H protein (129 aa).

In terms of domain architecture, Lipoyl-binding spans 24-106 (TFTVGISEHA…YGDGWLFRIK (83 aa)). Lysine 65 bears the N6-lipoyllysine mark.

It belongs to the GcvH family. As to quaternary structure, the glycine cleavage system is composed of four proteins: P, T, L and H. Requires (R)-lipoate as cofactor.

The glycine cleavage system catalyzes the degradation of glycine. The H protein shuttles the methylamine group of glycine from the P protein to the T protein. This chain is Glycine cleavage system H protein, found in Pseudoalteromonas atlantica (strain T6c / ATCC BAA-1087).